Consider the following 540-residue polypeptide: Chaperonin GroEL (540 aa).

ATP-binding positions include 29–32 (TLGP), 86–90 (DGTTT), Gly-413, 476–478 (NAA), and Asp-492.

This sequence belongs to the chaperonin (HSP60) family. In terms of assembly, forms a cylinder of 14 subunits composed of two heptameric rings stacked back-to-back. Interacts with the co-chaperonin GroES.

It localises to the cytoplasm. The enzyme catalyses ATP + H2O + a folded polypeptide = ADP + phosphate + an unfolded polypeptide.. Together with its co-chaperonin GroES, plays an essential role in assisting protein folding. The GroEL-GroES system forms a nano-cage that allows encapsulation of the non-native substrate proteins and provides a physical environment optimized to promote and accelerate protein folding. In Streptococcus agalactiae, this protein is Chaperonin GroEL.